Here is a 387-residue protein sequence, read N- to C-terminus: Zinc finger protein neuro-d4 (387 aa).

Residues Lys106, Lys129, and Lys133 each participate in a glycyl lysine isopeptide (Lys-Gly) (interchain with G-Cter in SUMO2) cross-link. Residues 195–218 (YVCDICGKRYKNRPGLSYHYTHTH) form a C2H2-type zinc finger. 2 PHD-type zinc fingers span residues 271–328 (NGYC…CKSC) and 325–375 (CKSC…CLRH). Zn(2+) is bound by residues Cys274, Cys277, Cys293, Cys296, His301, Cys304, Cys322, Cys325, Cys328, Cys331, Cys343, Cys346, His351, Cys354, Cys369, and Cys372.

It belongs to the requiem/DPF family. As to quaternary structure, component of neuron-specific chromatin remodeling complex (nBAF complex) composed of at least, ARID1A/BAF250A or ARID1B/BAF250B, SMARCD1/BAF60A, SMARCD3/BAF60C, SMARCA2/BRM/BAF190B, SMARCA4/BRG1/BAF190A, SMARCB1/BAF47, SMARCC1/BAF155, SMARCE1/BAF57, SMARCC2/BAF170, DPF1/BAF45B, DPF3/BAF45C, ACTL6B/BAF53B and actin.

The protein resides in the cytoplasm. It localises to the nucleus. In terms of biological role, may have an important role in developing neurons by participating in regulation of cell survival, possibly as a neurospecific transcription factor. Belongs to the neuron-specific chromatin remodeling complex (nBAF complex). During neural development a switch from a stem/progenitor to a postmitotic chromatin remodeling mechanism occurs as neurons exit the cell cycle and become committed to their adult state. The transition from proliferating neural stem/progenitor cells to postmitotic neurons requires a switch in subunit composition of the npBAF and nBAF complexes. As neural progenitors exit mitosis and differentiate into neurons, npBAF complexes which contain ACTL6A/BAF53A and PHF10/BAF45A, are exchanged for homologous alternative ACTL6B/BAF53B and DPF1/BAF45B or DPF3/BAF45C subunits in neuron-specific complexes (nBAF). The npBAF complex is essential for the self-renewal/proliferative capacity of the multipotent neural stem cells. The nBAF complex along with CREST plays a role regulating the activity of genes essential for dendrite growth. The protein is Zinc finger protein neuro-d4 of Homo sapiens (Human).